Reading from the N-terminus, the 161-residue chain is Nucleotide-binding protein BMASAVP1_A0673 (161 aa).

Belongs to the YajQ family.

In terms of biological role, nucleotide-binding protein. In Burkholderia mallei (strain SAVP1), this protein is Nucleotide-binding protein BMASAVP1_A0673.